Reading from the N-terminus, the 656-residue chain is DNA ligase (656 aa).

NAD(+)-binding positions include 32 to 36 (DAVYD) and 81 to 82 (SL). Lys-112 serves as the catalytic N6-AMP-lysine intermediate. Positions 133, 167, and 306 each coordinate NAD(+). Zn(2+) contacts are provided by Cys-400, Cys-403, Cys-416, and Cys-421. The BRCT domain occupies 577-656 (ESSSVFSNKT…ELLKRLKEFD (80 aa)).

It belongs to the NAD-dependent DNA ligase family. LigA subfamily. It depends on Mg(2+) as a cofactor. Mn(2+) is required as a cofactor.

It carries out the reaction NAD(+) + (deoxyribonucleotide)n-3'-hydroxyl + 5'-phospho-(deoxyribonucleotide)m = (deoxyribonucleotide)n+m + AMP + beta-nicotinamide D-nucleotide.. DNA ligase that catalyzes the formation of phosphodiester linkages between 5'-phosphoryl and 3'-hydroxyl groups in double-stranded DNA using NAD as a coenzyme and as the energy source for the reaction. It is essential for DNA replication and repair of damaged DNA. The polypeptide is DNA ligase (Helicobacter pylori (strain Shi470)).